The following is a 507-amino-acid chain: ATP synthase subunit alpha, chloroplastic (507 aa).

170–177 (GDRQTGKT) contributes to the ATP binding site.

It belongs to the ATPase alpha/beta chains family. In terms of assembly, F-type ATPases have 2 components, CF(1) - the catalytic core - and CF(0) - the membrane proton channel. CF(1) has five subunits: alpha(3), beta(3), gamma(1), delta(1), epsilon(1). CF(0) has four main subunits: a, b, b' and c.

The protein resides in the plastid. It localises to the chloroplast thylakoid membrane. The enzyme catalyses ATP + H2O + 4 H(+)(in) = ADP + phosphate + 5 H(+)(out). Its function is as follows. Produces ATP from ADP in the presence of a proton gradient across the membrane. The alpha chain is a regulatory subunit. This Spinacia oleracea (Spinach) protein is ATP synthase subunit alpha, chloroplastic.